A 31-amino-acid chain; its full sequence is U8-ctenitoxin-Co1a (31 aa).

Disulfide bonds link cysteine 4–cysteine 18 and cysteine 11–cysteine 24.

Expressed by the venom gland.

The protein localises to the secreted. Its function is as follows. Blocks voltage-gated sodium channels (Nav). This Ctenus ornatus (Brazilian spider) protein is U8-ctenitoxin-Co1a.